The primary structure comprises 129 residues: Protein Turandot A2 (129 aa).

The first 21 residues, 1-21 (MNSSTSLMCFALLLISPLCMG), serve as a signal peptide directing secretion. Residue asparagine 49 is glycosylated (N-linked (GlcNAc...) asparagine).

This sequence belongs to the Turandot family.

It is found in the secreted. Functionally, a humoral factor that plays a role in stress tolerance; gives increased resistance to the lethal effects of bacterial challenge and stress. Regulated by the JAK/STAT pathway and NF-KB-like Relish pathway in the fat body, upd3 in the hemocytes and Mekk1 in response to septic injury and consequent immune response. The protein is Protein Turandot A2 (TotA2) of Drosophila simulans (Fruit fly).